Here is a 302-residue protein sequence, read N- to C-terminus: D-alanine--D-alanine ligase B (302 aa).

The 196-residue stretch at Lys-99–Glu-294 folds into the ATP-grasp domain. An ATP-binding site is contributed by Ile-126–Thr-181. Mg(2+) is bound by residues Asp-248, Glu-261, and Asn-263.

This sequence belongs to the D-alanine--D-alanine ligase family. Mg(2+) is required as a cofactor. It depends on Mn(2+) as a cofactor.

It is found in the cytoplasm. The enzyme catalyses 2 D-alanine + ATP = D-alanyl-D-alanine + ADP + phosphate + H(+). It participates in cell wall biogenesis; peptidoglycan biosynthesis. Cell wall formation. The polypeptide is D-alanine--D-alanine ligase B (Clostridium perfringens (strain 13 / Type A)).